A 521-amino-acid chain; its full sequence is Bifunctional purine biosynthesis protein PurH (521 aa).

Residues 1 to 145 form the MGS-like domain; the sequence is MIKQALISVS…KNHRDVTVIV (145 aa).

Belongs to the PurH family.

The catalysed reaction is (6R)-10-formyltetrahydrofolate + 5-amino-1-(5-phospho-beta-D-ribosyl)imidazole-4-carboxamide = 5-formamido-1-(5-phospho-D-ribosyl)imidazole-4-carboxamide + (6S)-5,6,7,8-tetrahydrofolate. The enzyme catalyses IMP + H2O = 5-formamido-1-(5-phospho-D-ribosyl)imidazole-4-carboxamide. It participates in purine metabolism; IMP biosynthesis via de novo pathway; 5-formamido-1-(5-phospho-D-ribosyl)imidazole-4-carboxamide from 5-amino-1-(5-phospho-D-ribosyl)imidazole-4-carboxamide (10-formyl THF route): step 1/1. The protein operates within purine metabolism; IMP biosynthesis via de novo pathway; IMP from 5-formamido-1-(5-phospho-D-ribosyl)imidazole-4-carboxamide: step 1/1. This chain is Bifunctional purine biosynthesis protein PurH, found in Burkholderia multivorans (strain ATCC 17616 / 249).